Here is a 489-residue protein sequence, read N- to C-terminus: Blue-light-activated histidine kinase (489 aa).

Residues 19–93 (ATDPFRAAVE…AIKSAIAAEK (75 aa)) enclose the PAS domain. The residue at position 69 (Cys-69) is an S-4a-FMN cysteine. PAC domains lie at 93 to 147 (KPID…ELEK) and 232 to 281 (YSIE…NKAL). An HWE histidine kinase domain region spans residues 259-341 (NPLVLGIVQD…LLKENWAGAT (83 aa)). The residue at position 288 (His-288) is a Phosphohistidine; by autocatalysis.

In terms of processing, FMN binds covalently to cysteine after exposure to blue light and this bond is spontaneously broken in the dark.

The enzyme catalyses ATP + protein L-histidine = ADP + protein N-phospho-L-histidine.. Photosensitive kinase that is involved in increased bacterial virulence upon exposure to light. Once ejected from an infected animal host, sunlight acts as an environmental signal that increases the virulence of the bacterium, preparing it for infection of the next host. This photoreceptor protein is directly related to the bacterium's survival and replication within host macrophages, as it is required for optimal replication of bacteria inside macrophages. This is Blue-light-activated histidine kinase from Brucella abortus (strain 2308).